The following is a 396-amino-acid chain: Putative O-antigen transporter (396 aa).

The next 11 helical transmembrane spans lie at 5–25 (ILLLFLVHGANYLFPFIVLPY), 32–52 (IETFADVAKIQAAVMLLSLIV), 82–102 (IVKLLLATICLALGCVHLMYV), 107–127 (LIYPFIISSIYLYGSALFATW), 137–157 (AVVIATTIAKLTGVILTFILV), 163–183 (IVAALFTQNIGMFISGIISIY), 211–231 (FFLSLAATSVYTYFNVILLSF), 286–306 (AIFGVCISAGLVFLGPMLTTI), 322–342 (MFLLPATISISTILSQWMLIP), 348–368 (ILSRIYILGAIVHLLYAFPLV), and 372–392 (GAWGMVISILFTEVLIVLFML).

It belongs to the polysaccharide synthase family.

The protein localises to the cell inner membrane. It functions in the pathway bacterial outer membrane biogenesis; LPS O-antigen biosynthesis. Functionally, may be involved in the translocation process of the nascent O-polysaccharide molecules and/or its ligation to lipid A core units. The polypeptide is Putative O-antigen transporter (rfbX) (Shigella dysenteriae).